The primary structure comprises 329 residues: Solute carrier family 35 member B1 (329 aa).

8 consecutive transmembrane segments (helical) span residues 21 to 41 (AVCFCGVFVCYFYYGILQETI), 60 to 80 (TLVFIQCIINAAFARLLIQFF), 91 to 111 (WLYGLCSLSYLGAMVSSNSAL), 142 to 162 (YPMAKYLCVFLIVGGVALFLY), 175 to 195 (VFGFGEMLLLLSLTLDGLTGV), 220 to 240 (TLVLGIAVLWSGEVWEFLAFT), 250 to 270 (ILLFGITSALGQTFIFMTVVY), and 292 to 312 (VLLFGNVISHMQWFGTILVFL). Positions 325 to 329 (KKTTH) match the Di-lysine motif motif.

This sequence belongs to the nucleotide-sugar transporter family. SLC35B subfamily.

It localises to the endoplasmic reticulum membrane. Probable sugar transporter. This chain is Solute carrier family 35 member B1 (slc35b1), found in Danio rerio (Zebrafish).